The chain runs to 449 residues: Doublesex- and mab-3-related transcription factor A2 (449 aa).

The DM DNA-binding region spans 57–104 (CARCRNHGVVSALKGHKRYCRWKDCMCAKCTLIAERQRVMAAQVALRR). The disordered stretch occupies residues 166-259 (KNQLSGSATP…PSPSSAASRH (94 aa)). The segment covering 167-177 (NQLSGSATPQP) has biased composition (polar residues). A compositionally biased stretch (low complexity) spans 230–240 (GSVSSIGSDSG). Residues 260–295 (MNAIDILTRVFPSHKRSVLELVLQGCGKDVVQAIEQ) enclose the DMA domain.

This sequence belongs to the DMRT family.

The protein localises to the nucleus. Functionally, may be involved in sexual development. This chain is Doublesex- and mab-3-related transcription factor A2 (dmrta2), found in Oreochromis niloticus (Nile tilapia).